A 428-amino-acid polypeptide reads, in one-letter code: GTPase Obg (428 aa).

Residues 1-158 form the Obg domain; it reads MFIDTAKIFV…RWVALELKLL (158 aa). The 173-residue stretch at 159–331 folds into the OBG-type G domain; the sequence is ADVGLLGFPN…VIKEAARMLK (173 aa). GTP is bound by residues 165-172, 190-194, 212-215, 282-285, and 312-314; these read GFPNVGKS, FTTLK, DVPG, NKCD, and SAA. Residues Ser172 and Thr192 each coordinate Mg(2+). The region spanning 345-428 is the OCT domain; it reads RFIPEDKKFT…LNDFEFEYLL (84 aa).

This sequence belongs to the TRAFAC class OBG-HflX-like GTPase superfamily. OBG GTPase family. Monomer. The cofactor is Mg(2+).

The protein resides in the cytoplasm. An essential GTPase which binds GTP, GDP and possibly (p)ppGpp with moderate affinity, with high nucleotide exchange rates and a fairly low GTP hydrolysis rate. Plays a role in control of the cell cycle, stress response, ribosome biogenesis and in those bacteria that undergo differentiation, in morphogenesis control. This chain is GTPase Obg, found in Clostridium perfringens (strain ATCC 13124 / DSM 756 / JCM 1290 / NCIMB 6125 / NCTC 8237 / Type A).